A 216-amino-acid polypeptide reads, in one-letter code: Large ribosomal subunit protein uL3 (216 aa).

Residues 134–153 form a disordered region; it reads RATHGNSRSHNVPGSIGMAQ. The residue at position 153 (Gln153) is an N5-methylglutamine.

This sequence belongs to the universal ribosomal protein uL3 family. As to quaternary structure, part of the 50S ribosomal subunit. Forms a cluster with proteins L14 and L19. In terms of processing, methylated by PrmB.

Its function is as follows. One of the primary rRNA binding proteins, it binds directly near the 3'-end of the 23S rRNA, where it nucleates assembly of the 50S subunit. This is Large ribosomal subunit protein uL3 from Cupriavidus pinatubonensis (strain JMP 134 / LMG 1197) (Cupriavidus necator (strain JMP 134)).